We begin with the raw amino-acid sequence, 327 residues long: Phenylalanine--tRNA ligase alpha subunit (327 aa).

Position 252 (Glu252) interacts with Mg(2+).

Belongs to the class-II aminoacyl-tRNA synthetase family. Phe-tRNA synthetase alpha subunit type 1 subfamily. As to quaternary structure, tetramer of two alpha and two beta subunits. Requires Mg(2+) as cofactor.

It is found in the cytoplasm. It carries out the reaction tRNA(Phe) + L-phenylalanine + ATP = L-phenylalanyl-tRNA(Phe) + AMP + diphosphate + H(+). The chain is Phenylalanine--tRNA ligase alpha subunit from Tolumonas auensis (strain DSM 9187 / NBRC 110442 / TA 4).